Consider the following 510-residue polypeptide: Ribonuclease Y (510 aa).

The helical transmembrane segment at 2–22 (IYIIFSSIFAGFILGFLVRVF) threads the bilayer. Positions 198-258 (TVASVELPND…IRKELAKRTL (61 aa)) constitute a KH domain. An HD domain is found at 324–419 (VLSHSKETAI…VQIADAISAS (96 aa)).

It belongs to the RNase Y family.

It is found in the cell membrane. In terms of biological role, endoribonuclease that initiates mRNA decay. This is Ribonuclease Y from Borrelia garinii subsp. bavariensis (strain ATCC BAA-2496 / DSM 23469 / PBi) (Borreliella bavariensis).